Here is a 352-residue protein sequence, read N- to C-terminus: Ion-translocating oxidoreductase complex subunit D (352 aa).

A run of 5 helical transmembrane segments spans residues 20-40, 42-62, 78-109, 123-143, and 148-168; these read IMLL…WFFG, GTLV…ALVL, ALLT…VIIA, PAMI…TSWL, and IAVN…GHTA. Thr-187 is modified (FMN phosphoryl threonine). Transmembrane regions (helical) follow at residues 214 to 234, 242 to 262, 267 to 287, 301 to 321, and 322 to 342; these read ILAG…GVWL, WHIP…GWLF, LAAP…FFIL, LIFG…GGYP, and DGVA…DYYT.

The protein belongs to the NqrB/RnfD family. In terms of assembly, the complex is composed of six subunits: RsxA, RsxB, RsxC, RsxD, RsxE and RsxG. FMN is required as a cofactor.

The protein resides in the cell inner membrane. Part of a membrane-bound complex that couples electron transfer with translocation of ions across the membrane. Required to maintain the reduced state of SoxR. This Escherichia coli O6:K15:H31 (strain 536 / UPEC) protein is Ion-translocating oxidoreductase complex subunit D.